The sequence spans 280 residues: Diaminopimelate epimerase (280 aa).

3 residues coordinate substrate: asparagine 12, glutamine 45, and asparagine 65. Cysteine 74 acts as the Proton donor in catalysis. Residues 75–76 (GN), asparagine 163, asparagine 196, and 214–215 (ER) each bind substrate. Cysteine 223 (proton acceptor) is an active-site residue. 224–225 (GT) is a substrate binding site.

Belongs to the diaminopimelate epimerase family. As to quaternary structure, homodimer.

The protein localises to the cytoplasm. It catalyses the reaction (2S,6S)-2,6-diaminopimelate = meso-2,6-diaminopimelate. Its pathway is amino-acid biosynthesis; L-lysine biosynthesis via DAP pathway; DL-2,6-diaminopimelate from LL-2,6-diaminopimelate: step 1/1. Catalyzes the stereoinversion of LL-2,6-diaminopimelate (L,L-DAP) to meso-diaminopimelate (meso-DAP), a precursor of L-lysine and an essential component of the bacterial peptidoglycan. The protein is Diaminopimelate epimerase of Shewanella sediminis (strain HAW-EB3).